The chain runs to 263 residues: Cysteine-rich repeat secretory protein 55 (263 aa).

A signal peptide spans 1 to 20; sequence MKTLVVKCFLLLALVCSCRA. Gnk2-homologous domains lie at 22–126 and 132–240; these read DSIW…QENF and TGAG…FYPF.

Belongs to the cysteine-rich repeat secretory protein family.

It localises to the secreted. In Arabidopsis thaliana (Mouse-ear cress), this protein is Cysteine-rich repeat secretory protein 55 (CRRSP55).